The following is a 116-amino-acid chain: Large ribosomal subunit protein bL19 (116 aa).

This sequence belongs to the bacterial ribosomal protein bL19 family.

Its function is as follows. This protein is located at the 30S-50S ribosomal subunit interface and may play a role in the structure and function of the aminoacyl-tRNA binding site. The chain is Large ribosomal subunit protein bL19 from Mycoplasmopsis agalactiae (strain NCTC 10123 / CIP 59.7 / PG2) (Mycoplasma agalactiae).